We begin with the raw amino-acid sequence, 258 residues long: Ribose-5-phosphate isomerase (258 aa).

The protein belongs to the ribose 5-phosphate isomerase family.

The protein localises to the cytoplasm. It carries out the reaction aldehydo-D-ribose 5-phosphate = D-ribulose 5-phosphate. The protein operates within carbohydrate degradation; pentose phosphate pathway; D-ribose 5-phosphate from D-ribulose 5-phosphate (non-oxidative stage): step 1/1. In Saccharomyces cerevisiae (strain YJM789) (Baker's yeast), this protein is Ribose-5-phosphate isomerase (RKI1).